The following is a 392-amino-acid chain: MSHRKYEAPRHGSLAFLPRKRAARHRGKVKSFPKDDPKKPVHLTASMGYKAGMTTVVRDLDRPGAKMHKKEIVEAVTIIETPPLVAVGVVGYIETPRGLRSLTTVWAEHLSDEVKRRFYKNWYKSKKKAFTKYAKKHAEENGASITRELERIKKYCTVVRVLAHTQIRKTPLKQKKAHLMEIQVNGGSVADKVDFARNLFEKPIEIDSIFEKDEMIDVIAVTKGHGFQGVTSRWGTKKLPRKTHKGLRKVACIGAWHPSHVQWTVARAGQMGYHHRTSCNHKVFRIGKGSDEGNASTDFDISKKQITPMGGFVRYGEVKNDYIMVKGSVPGVKKRVMTLRKTLYPQTSRRATEKVELKWIDTSSKFGHGAFQTPEEKRAFMGTLKKDLVTSA.

This sequence belongs to the universal ribosomal protein uL3 family.

The protein localises to the cytoplasm. Its function is as follows. The L3 protein is a component of the large subunit of cytoplasmic ribosomes. In Aspergillus fumigatus (strain ATCC MYA-4609 / CBS 101355 / FGSC A1100 / Af293) (Neosartorya fumigata), this protein is Large ribosomal subunit protein uL3 (rpl3).